We begin with the raw amino-acid sequence, 1332 residues long: DEMETER-like protein 2 (1332 aa).

A compositionally biased stretch (basic and acidic residues) spans 1-23 (MEVEGEVREKEARVKGRQPETEV). 3 disordered regions span residues 1–29 (MEVE…GLPQ), 137–242 (VSTS…TSEE), and 280–317 (VEGS…KKTD). Polar residues predominate over residues 137-153 (VSTSTQRTEPESPQITL). The segment covering 223-236 (SKAGIKKSSIAATA) has biased composition (low complexity). Residues 301–312 (PKGRRGQRRSNG) show a composition bias toward basic residues. The segment at 497-595 (KVQLDPETSR…AYMDLAAEFP (99 aa)) is DEMETER. A compositionally biased stretch (polar residues) spans 739 to 753 (HQQDPESTIQTQDQQ). The segment at 739 to 810 (HQQDPESTIQ…GGRKRERTER (72 aa)) is disordered. The segment covering 763 to 777 (KNRKKPTTSKPKKKS) has biased composition (basic residues). Positions 787 to 810 (KSVDWDSLRKEAESGGRKRERTER) are enriched in basic and acidic residues. 4 residues coordinate [4Fe-4S] cluster: C970, C977, C980, and C986.

This sequence belongs to the DNA glycosylase family. DEMETER subfamily. [4Fe-4S] cluster is required as a cofactor.

It localises to the nucleus. Its function is as follows. Potential transcriptional activator that may act by nicking the target promoter. Catalyzes the release of 5-methylcytosine (5-meC) from DNA by a glycosylase/lyase mechanism. This Arabidopsis thaliana (Mouse-ear cress) protein is DEMETER-like protein 2 (DML2).